The primary structure comprises 197 residues: uncharacterized protein (197 aa).

This is an uncharacterized protein from Caenorhabditis elegans.